Here is a 229-residue protein sequence, read N- to C-terminus: ACD11 homolog protein (229 aa).

Residues glutamate 84, lysine 88, arginine 123, arginine 127, and histidine 166 each coordinate an N-acylsphingoid base 1-phosphate.

Belongs to the GLTP family.

The polypeptide is ACD11 homolog protein (Arabidopsis thaliana (Mouse-ear cress)).